We begin with the raw amino-acid sequence, 199 residues long: Recombination protein RecR (199 aa).

A C4-type zinc finger spans residues 57–72 (CSVCGNLTDDDPCNIC). One can recognise a Toprim domain in the interval 80–176 (STVLVVEDSK…TVTRLARGLA (97 aa)).

This sequence belongs to the RecR family.

May play a role in DNA repair. It seems to be involved in an RecBC-independent recombinational process of DNA repair. It may act with RecF and RecO. The chain is Recombination protein RecR from Streptococcus mutans serotype c (strain ATCC 700610 / UA159).